The following is a 534-amino-acid chain: Pentatricopeptide repeat-containing protein At5g08305 (534 aa).

PPR repeat units lie at residues 41–71 (PFVS…LSDP), 72–106 (PNYG…GLLP), 107–141 (DHMT…GLEW), 142–172 (DLFI…MPHK), 173–203 (NLVT…MSER), 204–238 (DVVT…GSSK), 240–274 (NEVT…HLPL), 275–305 (TVIL…ASVK), 308–342 (DALM…KIDP), 343–377 (DEIT…GAEP), and 378–408 (KSEH…MPIK). A type E motif region spans residues 413-488 (MLGALLNGCI…IAGHSILDLD (76 aa)). The segment at 489–519 (GTRHRFIAHDKTHFHSDKIYAVLQLTGAWMN) is type E(+) motif.

It belongs to the PPR family. PCMP-E subfamily.

This chain is Pentatricopeptide repeat-containing protein At5g08305 (PCMP-E105), found in Arabidopsis thaliana (Mouse-ear cress).